The primary structure comprises 180 residues: NAD(P)H-quinone oxidoreductase subunit I, chloroplastic (180 aa).

2 4Fe-4S ferredoxin-type domains span residues 55 to 84 and 95 to 124; these read GRIH…VDWR and LNYS…MTEE. 8 residues coordinate [4Fe-4S] cluster: C64, C67, C70, C74, C104, C107, C110, and C114.

This sequence belongs to the complex I 23 kDa subunit family. NDH is composed of at least 16 different subunits, 5 of which are encoded in the nucleus. [4Fe-4S] cluster serves as cofactor.

The protein resides in the plastid. The protein localises to the chloroplast thylakoid membrane. It carries out the reaction a plastoquinone + NADH + (n+1) H(+)(in) = a plastoquinol + NAD(+) + n H(+)(out). It catalyses the reaction a plastoquinone + NADPH + (n+1) H(+)(in) = a plastoquinol + NADP(+) + n H(+)(out). Functionally, NDH shuttles electrons from NAD(P)H:plastoquinone, via FMN and iron-sulfur (Fe-S) centers, to quinones in the photosynthetic chain and possibly in a chloroplast respiratory chain. The immediate electron acceptor for the enzyme in this species is believed to be plastoquinone. Couples the redox reaction to proton translocation, and thus conserves the redox energy in a proton gradient. The chain is NAD(P)H-quinone oxidoreductase subunit I, chloroplastic from Drimys granadensis.